The primary structure comprises 448 residues: tRNA modification GTPase MnmE (448 aa).

Positions 24, 81, and 120 each coordinate (6S)-5-formyl-5,6,7,8-tetrahydrofolate. The region spanning Gly-216–Gly-373 is the TrmE-type G domain. Asn-226 contributes to the K(+) binding site. GTP-binding positions include Asn-226 to Ser-231, Thr-245 to Thr-251, and Asp-270 to Gly-273. Ser-230 provides a ligand contact to Mg(2+). Positions 245, 247, and 250 each coordinate K(+). Thr-251 provides a ligand contact to Mg(2+). Lys-448 is a binding site for (6S)-5-formyl-5,6,7,8-tetrahydrofolate.

The protein belongs to the TRAFAC class TrmE-Era-EngA-EngB-Septin-like GTPase superfamily. TrmE GTPase family. Homodimer. Heterotetramer of two MnmE and two MnmG subunits. Requires K(+) as cofactor.

The protein localises to the cytoplasm. In terms of biological role, exhibits a very high intrinsic GTPase hydrolysis rate. Involved in the addition of a carboxymethylaminomethyl (cmnm) group at the wobble position (U34) of certain tRNAs, forming tRNA-cmnm(5)s(2)U34. This chain is tRNA modification GTPase MnmE, found in Neisseria meningitidis serogroup A / serotype 4A (strain DSM 15465 / Z2491).